The following is a 199-amino-acid chain: Imidazole glycerol phosphate synthase subunit HisH 2 (199 aa).

The Glutamine amidotransferase type-1 domain occupies 1–199 (MIAVIDVSGN…NNFLSLESTC (199 aa)). Cys-76 (nucleophile) is an active-site residue. Active-site residues include His-177 and Glu-179.

As to quaternary structure, heterodimer of HisH and HisF.

It is found in the cytoplasm. The enzyme catalyses 5-[(5-phospho-1-deoxy-D-ribulos-1-ylimino)methylamino]-1-(5-phospho-beta-D-ribosyl)imidazole-4-carboxamide + L-glutamine = D-erythro-1-(imidazol-4-yl)glycerol 3-phosphate + 5-amino-1-(5-phospho-beta-D-ribosyl)imidazole-4-carboxamide + L-glutamate + H(+). The catalysed reaction is L-glutamine + H2O = L-glutamate + NH4(+). It functions in the pathway amino-acid biosynthesis; L-histidine biosynthesis; L-histidine from 5-phospho-alpha-D-ribose 1-diphosphate: step 5/9. Functionally, IGPS catalyzes the conversion of PRFAR and glutamine to IGP, AICAR and glutamate. The HisH subunit provides the glutamine amidotransferase activity that produces the ammonia necessary to HisF for the synthesis of IGP and AICAR. This Legionella pneumophila subsp. pneumophila (strain Philadelphia 1 / ATCC 33152 / DSM 7513) protein is Imidazole glycerol phosphate synthase subunit HisH 2.